The chain runs to 498 residues: ATP synthase subunit beta, chloroplastic (498 aa).

Residue 172-179 participates in ATP binding; it reads GGAGVGKT.

It belongs to the ATPase alpha/beta chains family. In terms of assembly, F-type ATPases have 2 components, CF(1) - the catalytic core - and CF(0) - the membrane proton channel. CF(1) has five subunits: alpha(3), beta(3), gamma(1), delta(1), epsilon(1). CF(0) has four main subunits: a(1), b(1), b'(1) and c(9-12).

Its subcellular location is the plastid. It localises to the chloroplast thylakoid membrane. It catalyses the reaction ATP + H2O + 4 H(+)(in) = ADP + phosphate + 5 H(+)(out). Functionally, produces ATP from ADP in the presence of a proton gradient across the membrane. The catalytic sites are hosted primarily by the beta subunits. The polypeptide is ATP synthase subunit beta, chloroplastic (Gossypium barbadense (Sea Island cotton)).